Here is a 359-residue protein sequence, read N- to C-terminus: Peptide chain release factor 1 (359 aa).

Position 236 is an N5-methylglutamine (Gln236).

Belongs to the prokaryotic/mitochondrial release factor family. Post-translationally, methylated by PrmC. Methylation increases the termination efficiency of RF1.

Its subcellular location is the cytoplasm. Peptide chain release factor 1 directs the termination of translation in response to the peptide chain termination codons UAG and UAA. The chain is Peptide chain release factor 1 from Streptococcus pneumoniae serotype 2 (strain D39 / NCTC 7466).